The primary structure comprises 426 residues: L-cysteine:1D-myo-inositol 2-amino-2-deoxy-alpha-D-glucopyranoside ligase (426 aa).

A Zn(2+)-binding site is contributed by Cys43. L-cysteinyl-5'-AMP-binding positions include 43-46 (CGIT), Ser58, and 81-83 (NVT). A 'HIGH' region motif is present at residues 45–55 (ITPYDATHMGH). The short motif at 200 to 205 (ERGGDP) is the 'ERGGDP' region element. Residue Trp241 participates in L-cysteinyl-5'-AMP binding. Cys245 contacts Zn(2+). 263 to 265 (GSD) contributes to the L-cysteinyl-5'-AMP binding site. His270 provides a ligand contact to Zn(2+). Residue Val296 participates in L-cysteinyl-5'-AMP binding. Residues 302–306 (KMSKS) carry the 'KMSKS' region motif.

This sequence belongs to the class-I aminoacyl-tRNA synthetase family. MshC subfamily. As to quaternary structure, monomer. Zn(2+) serves as cofactor.

It carries out the reaction 1D-myo-inositol 2-amino-2-deoxy-alpha-D-glucopyranoside + L-cysteine + ATP = 1D-myo-inositol 2-(L-cysteinylamino)-2-deoxy-alpha-D-glucopyranoside + AMP + diphosphate + H(+). In terms of biological role, catalyzes the ATP-dependent condensation of GlcN-Ins and L-cysteine to form L-Cys-GlcN-Ins. This Arthrobacter sp. (strain FB24) protein is L-cysteine:1D-myo-inositol 2-amino-2-deoxy-alpha-D-glucopyranoside ligase.